Consider the following 95-residue polypeptide: uncharacterized protein (95 aa).

The helical transmembrane segment at 45–65 threads the bilayer; that stretch reads WLSGLAFVLQAALVMPVVLAF.

It is found in the membrane. This is an uncharacterized protein from Mycobacterium leprae (strain TN).